A 607-amino-acid polypeptide reads, in one-letter code: Pescadillo homolog (607 aa).

A BRCT domain is found at 320 to 413; the sequence is KLKNLFKGLK…KLLPVNKYLI (94 aa). Residues 486-607 are disordered; the sequence is EALNSGALEE…KTQRKEILAK (122 aa). Positions 495 to 511 are enriched in acidic residues; the sequence is EAPEEEDDDEEAPEEDE. Residues 530 to 549 show a composition bias toward basic and acidic residues; the sequence is IFKENPSEQKKLTKQEEALR. Basic residues predominate over residues 551–562; sequence RMVKSRHKKLYR. The segment covering 563–607 has biased composition (basic and acidic residues); that stretch reads KMLEKQKKQTKEANLLKEKRQQIDKKQRVEQTQKRKTQRKEILAK.

This sequence belongs to the pescadillo family.

The protein resides in the nucleus. It is found in the nucleolus. The protein localises to the nucleoplasm. In terms of biological role, required for maturation of ribosomal RNAs and formation of the large ribosomal subunit. This chain is Pescadillo homolog, found in Culex quinquefasciatus (Southern house mosquito).